Reading from the N-terminus, the 203-residue chain is Probable chemoreceptor glutamine deamidase CheD (203 aa).

This sequence belongs to the CheD family.

The catalysed reaction is L-glutaminyl-[protein] + H2O = L-glutamyl-[protein] + NH4(+). Probably deamidates glutamine residues to glutamate on methyl-accepting chemotaxis receptors (MCPs), playing an important role in chemotaxis. The chain is Probable chemoreceptor glutamine deamidase CheD from Herminiimonas arsenicoxydans.